The primary structure comprises 125 residues: Small ribosomal subunit protein eS8 (125 aa).

It belongs to the eukaryotic ribosomal protein eS8 family. In terms of assembly, part of the 30S ribosomal subunit.

The sequence is that of Small ribosomal subunit protein eS8 from Methanosarcina mazei (strain ATCC BAA-159 / DSM 3647 / Goe1 / Go1 / JCM 11833 / OCM 88) (Methanosarcina frisia).